Consider the following 109-residue polypeptide: Small ribosomal subunit protein uS15c (109 aa).

This sequence belongs to the universal ribosomal protein uS15 family. In terms of assembly, part of the 30S ribosomal subunit.

It is found in the plastid. It localises to the chloroplast. The protein is Small ribosomal subunit protein uS15c (rps15-A) of Trachelium caeruleum (Blue throatwort).